The primary structure comprises 441 residues: Protein cortex (441 aa).

WD repeat units follow at residues 110-148, 149-187, 193-233, 235-276, 277-320, 345-379, and 380-420; these read SITS…VDQG, QTMF…QFVQ, IQIC…KSLV, IEGA…RFMK, TNEI…KLRQ, SLWS…ESHT, and GLNR…KILA. Positions 379-390 match the D-box motif; sequence TGLNRIRTMVFS.

The protein belongs to the WD repeat CORT family.

It localises to the cytoplasm. In terms of biological role, controls wing pigmentation patterning, possibly by regulating scale cell development. Probably acts as an activator of the anaphase promoting complex/cyclosome (APC/C) that promotes the ubiquitin ligase activity and substrate specificity of the APC/C. The polypeptide is Protein cortex (Biston betularia (Pepper-and-salt geometer moth)).